The primary structure comprises 359 residues: Medium-wave-sensitive opsin 1 (359 aa).

Residues M1–V47 are Extracellular-facing. The required for 11-cis-retinal regeneration stretch occupies residues D12–P38. An N-linked (GlcNAc...) asparagine glycan is attached at N29. A helical transmembrane segment spans residues Y48 to A72. Residues T73–N84 are Cytoplasmic-facing. Residues W85–I110 form a helical membrane-spanning segment. Topologically, residues Y111–E124 are extracellular. C121 and C198 are joined by a disulfide. The helical transmembrane segment at G125–W144 threads the bilayer. Residues E145 to L163 lie on the Cytoplasmic side of the membrane. A helical membrane pass occupies residues A164–S187. At R188–S213 the chain is on the extracellular side. A helical transmembrane segment spans residues Y214–I241. The Cytoplasmic portion of the chain corresponds to R242–R263. The helical transmembrane segment at M264–T287 threads the bilayer. The Extracellular segment spans residues A288–H295. The chain crosses the membrane as a helical span at residues P296–M320. K307 carries the post-translational modification N6-(retinylidene)lysine. The Cytoplasmic portion of the chain corresponds to N321–A359.

It belongs to the G-protein coupled receptor 1 family. Opsin subfamily. In terms of assembly, monomer. Homodimer. Homotetramer. N-glycosylated. O-glycosylated. Post-translationally, phosphorylated on some or all of the serine and threonine residues present in the C-terminal region. Expressed in retina (at protein level). Expressed in cone photoreceptor cells (at protein level).

It localises to the cell membrane. Visual pigments are the light-absorbing molecules that mediate vision. They consist of an apoprotein, opsin, covalently linked to cis-retinal. May increase spectral sensitivity in dim light. The polypeptide is Medium-wave-sensitive opsin 1 (Opn1mw) (Mus musculus (Mouse)).